The following is a 420-amino-acid chain: Putative T-box protein 33 (420 aa).

A DNA-binding region (T-box) is located at residues 93-291; that stretch reads LWKELHYLSN…ANPTSRGDAK (199 aa). The segment covering 395-412 has biased composition (polar residues); the sequence is SPPLQPTATSPEASQNQI. A disordered region spans residues 395-420; the sequence is SPPLQPTATSPEASQNQIKLEMNQYM.

The protein resides in the nucleus. The protein is Putative T-box protein 33 (tbx-33) of Caenorhabditis elegans.